Here is a 421-residue protein sequence, read N- to C-terminus: Serine--tRNA ligase (421 aa).

231-233 provides a ligand contact to L-serine; the sequence is TAE. 262 to 264 lines the ATP pocket; it reads RRE. E285 contributes to the L-serine binding site. 349 to 352 is an ATP binding site; that stretch reads EISS. S384 lines the L-serine pocket.

The protein belongs to the class-II aminoacyl-tRNA synthetase family. Type-1 seryl-tRNA synthetase subfamily. In terms of assembly, homodimer. The tRNA molecule binds across the dimer.

It localises to the cytoplasm. The catalysed reaction is tRNA(Ser) + L-serine + ATP = L-seryl-tRNA(Ser) + AMP + diphosphate + H(+). It carries out the reaction tRNA(Sec) + L-serine + ATP = L-seryl-tRNA(Sec) + AMP + diphosphate + H(+). Its pathway is aminoacyl-tRNA biosynthesis; selenocysteinyl-tRNA(Sec) biosynthesis; L-seryl-tRNA(Sec) from L-serine and tRNA(Sec): step 1/1. Its function is as follows. Catalyzes the attachment of serine to tRNA(Ser). Is also able to aminoacylate tRNA(Sec) with serine, to form the misacylated tRNA L-seryl-tRNA(Sec), which will be further converted into selenocysteinyl-tRNA(Sec). The polypeptide is Serine--tRNA ligase (Hydrogenobaculum sp. (strain Y04AAS1)).